The primary structure comprises 263 residues: Probable ribosomal RNA small subunit methyltransferase A (263 aa).

The S-adenosyl-L-methionine site is built by leucine 12, glycine 37, glutamate 58, aspartate 83, and asparagine 100.

It belongs to the class I-like SAM-binding methyltransferase superfamily. rRNA adenine N(6)-methyltransferase family. RsmA subfamily.

The protein resides in the cytoplasm. In terms of biological role, specifically dimethylates two adjacent adenosines in the loop of a conserved hairpin near the 3'-end of 16S rRNA in the 30S particle. May play a critical role in biogenesis of 30S subunits. This chain is Probable ribosomal RNA small subunit methyltransferase A, found in Methanococcus maripaludis (strain C7 / ATCC BAA-1331).